Here is a 127-residue protein sequence, read N- to C-terminus: Large ribosomal subunit protein bL20 (127 aa).

Belongs to the bacterial ribosomal protein bL20 family.

In terms of biological role, binds directly to 23S ribosomal RNA and is necessary for the in vitro assembly process of the 50S ribosomal subunit. It is not involved in the protein synthesizing functions of that subunit. This chain is Large ribosomal subunit protein bL20, found in Corynebacterium aurimucosum (strain ATCC 700975 / DSM 44827 / CIP 107346 / CN-1) (Corynebacterium nigricans).